An 814-amino-acid polypeptide reads, in one-letter code: Acyl-coenzyme A dehydrogenase (814 aa).

Glu497 serves as the catalytic Proton acceptor.

The protein belongs to the acyl-CoA dehydrogenase family. FAD is required as a cofactor.

The enzyme catalyses a medium-chain 2,3-saturated fatty acyl-CoA + oxidized [electron-transfer flavoprotein] + H(+) = a medium-chain (2E)-enoyl-CoA + reduced [electron-transfer flavoprotein]. It catalyses the reaction a long-chain 2,3-saturated fatty acyl-CoA + oxidized [electron-transfer flavoprotein] + H(+) = a long-chain (2E)-enoyl-CoA + reduced [electron-transfer flavoprotein]. The protein operates within lipid metabolism; fatty acid beta-oxidation. Functionally, catalyzes the dehydrogenation of acyl-coenzymes A (acyl-CoAs) to 2-enoyl-CoAs, the first step of the beta-oxidation cycle of fatty acid degradation. Is required for E.coli to utilize dodecanoate or oleate as the sole carbon and energy source for growth. The protein is Acyl-coenzyme A dehydrogenase of Escherichia coli (strain K12).